A 154-amino-acid chain; its full sequence is Large ribosomal subunit protein uL13 (154 aa).

This sequence belongs to the universal ribosomal protein uL13 family. In terms of assembly, part of the 50S ribosomal subunit.

This protein is one of the early assembly proteins of the 50S ribosomal subunit, although it is not seen to bind rRNA by itself. It is important during the early stages of 50S assembly. The sequence is that of Large ribosomal subunit protein uL13 from Rhodopseudomonas palustris (strain ATCC BAA-98 / CGA009).